A 507-amino-acid polypeptide reads, in one-letter code: Beta-glucosidase 13 (507 aa).

An N-terminal signal peptide occupies residues 1 to 22; the sequence is MRTKYFSLLVFIIVLASNEVIA. Residue Gln-50 coordinates a beta-D-glucoside. Residue Asn-81 is glycosylated (N-linked (GlcNAc...) asparagine). A beta-D-glucoside contacts are provided by residues His-154 and 199 to 200; that span reads NE. The active-site Proton donor is the Glu-200. Cysteines 219 and 227 form a disulfide. An N-linked (GlcNAc...) asparagine glycan is attached at Asn-226. Tyr-344 contacts a beta-D-glucoside. An N-linked (GlcNAc...) asparagine glycan is attached at Asn-358. Residues Glu-414, Trp-459, 466-467, and Phe-475 each bind a beta-D-glucoside; that span reads EW. The Nucleophile role is filled by Glu-414.

This sequence belongs to the glycosyl hydrolase 1 family.

The catalysed reaction is Hydrolysis of terminal, non-reducing beta-D-glucosyl residues with release of beta-D-glucose.. This Arabidopsis thaliana (Mouse-ear cress) protein is Beta-glucosidase 13.